Here is a 103-residue protein sequence, read N- to C-terminus: UPF0145 protein PTH_2690 (103 aa).

Belongs to the UPF0145 family.

This is UPF0145 protein PTH_2690 from Pelotomaculum thermopropionicum (strain DSM 13744 / JCM 10971 / SI).